We begin with the raw amino-acid sequence, 272 residues long: Cell division protein FtsQ (272 aa).

Topologically, residues 1–20 (MSSYAPREIPLDIRLMQGTS) are cytoplasmic. The chain crosses the membrane as a helical span at residues 21–40 (RALFWLVALGCLFVAGHWLM). At 41-272 (QRNWWDIRAV…KTPQPAGRKD (232 aa)) the chain is on the periplasmic side. In terms of domain architecture, POTRA spans 45 to 114 (WDIRAVRLQG…MQLAVTLQAQ (70 aa)).

Belongs to the FtsQ/DivIB family. FtsQ subfamily. As to quaternary structure, part of a complex composed of FtsB, FtsL and FtsQ.

It is found in the cell inner membrane. In terms of biological role, essential cell division protein. May link together the upstream cell division proteins, which are predominantly cytoplasmic, with the downstream cell division proteins, which are predominantly periplasmic. May control correct divisome assembly. This chain is Cell division protein FtsQ, found in Thiomonas arsenitoxydans (strain DSM 22701 / CIP 110005 / 3As).